The sequence spans 40 residues: Photosystem II reaction center protein J (40 aa).

Residues 8 to 28 form a helical membrane-spanning segment; the sequence is IPLWLIGTVTGIPVIGLVGIF.

It belongs to the PsbJ family. In terms of assembly, PSII is composed of 1 copy each of membrane proteins PsbA, PsbB, PsbC, PsbD, PsbE, PsbF, PsbH, PsbI, PsbJ, PsbK, PsbL, PsbM, PsbT, PsbX, PsbY, PsbZ, Psb30/Ycf12, at least 3 peripheral proteins of the oxygen-evolving complex and a large number of cofactors. It forms dimeric complexes.

The protein resides in the plastid. The protein localises to the chloroplast thylakoid membrane. Functionally, one of the components of the core complex of photosystem II (PSII). PSII is a light-driven water:plastoquinone oxidoreductase that uses light energy to abstract electrons from H(2)O, generating O(2) and a proton gradient subsequently used for ATP formation. It consists of a core antenna complex that captures photons, and an electron transfer chain that converts photonic excitation into a charge separation. The sequence is that of Photosystem II reaction center protein J from Cucumis sativus (Cucumber).